The chain runs to 462 residues: Fez family zinc finger protein 1 (462 aa).

The short motif at 34-49 (PLAFSIERIMSRTPEP) is the Engrailed homology 1 repressor element. 6 C2H2-type zinc fingers span residues 260–282 (FTCEVCGKVFNAHYNLTRHMPVH), 288–310 (FVCKICGKGFRQASTLCRHKIIH), 316–338 (HKCNQCGKAFNRSSTLNTHTRIH), 344–366 (FVCEFCGKGFHQKGNYKNHKLTH), 372–394 (FKCNICNKAFHQIYNLTFHMHTH), and 400–423 (FTCPTCGKGFCRNFDLKKHVRKLH). The tract at residues 441-462 (LLLPNREPSPTIQSPQLQKSGY) is disordered. Polar residues predominate over residues 448 to 462 (PSPTIQSPQLQKSGY).

Belongs to the krueppel C2H2-type zinc-finger protein family.

It localises to the nucleus. Transcription repressor. Involved in the development of the forebrain region. This is Fez family zinc finger protein 1 (fezf1) from Xenopus tropicalis (Western clawed frog).